Here is a 97-residue protein sequence, read N- to C-terminus: Small ribosomal subunit protein bS21 (97 aa).

The disordered stretch occupies residues 37 to 97; sequence EKPSVRKARE…APASSPTTTA (61 aa). The span at 76 to 97 shows a compositional bias: low complexity; sequence RAVAPRRPAAAPAPASSPTTTA.

Belongs to the bacterial ribosomal protein bS21 family.

The polypeptide is Small ribosomal subunit protein bS21 (Methylobacterium sp. (strain 4-46)).